A 312-amino-acid polypeptide reads, in one-letter code: Malate dehydrogenase (312 aa).

NAD(+) contacts are provided by residues 7–13 (GAAGGIG) and aspartate 34. 2 residues coordinate substrate: arginine 81 and arginine 87. Residues asparagine 94 and 117–119 (ITN) each bind NAD(+). Substrate-binding residues include asparagine 119 and arginine 153. Histidine 177 functions as the Proton acceptor in the catalytic mechanism. Methionine 227 is an NAD(+) binding site.

It belongs to the LDH/MDH superfamily. MDH type 1 family. In terms of assembly, homodimer.

The catalysed reaction is (S)-malate + NAD(+) = oxaloacetate + NADH + H(+). Its function is as follows. Catalyzes the reversible oxidation of malate to oxaloacetate. The polypeptide is Malate dehydrogenase (Yersinia pseudotuberculosis serotype O:1b (strain IP 31758)).